The sequence spans 807 residues: Protein FAR1-RELATED SEQUENCE 2 (807 aa).

Residues 52 to 138 form the FAR1 domain; the sequence is YFYREYARSV…VKEHNHEICP (87 aa). Residues 219-315 enclose the MULE domain; it reads VVLFDTFYVR…CLWSVLSKIS (97 aa). The segment at 499–535 adopts an SWIM-type zinc-finger fold; it reads FFVALNNELLDACCSCHLFEYQGFLCKHAILVLQSAD. Positions 660-680 form a coiled coil; the sequence is EDATNRSEELRQETEQVSSRA. Residues 788 to 798 show a composition bias toward polar residues; it reads GSSQFQGSDSS. Positions 788–807 are disordered; it reads GSSQFQGSDSSHPSDHRLSN.

It belongs to the FHY3/FAR1 family. As to expression, expressed in hypocotyls, rosette and cauline leaves, inflorescences stems, flowers and siliques.

Its subcellular location is the nucleus. Its function is as follows. Putative transcription activator involved in regulating light control of development. The polypeptide is Protein FAR1-RELATED SEQUENCE 2 (FRS2) (Arabidopsis thaliana (Mouse-ear cress)).